Reading from the N-terminus, the 231-residue chain is Two-component response regulator ORR1 (231 aa).

Positions 9-135 constitute a Response regulatory domain; that stretch reads RVLLVDDSPV…DVQRLRNCSP (127 aa). A 4-aspartylphosphate modification is found at D68.

The protein belongs to the ARR family. Type-A subfamily. Two-component system major event consists of a His-to-Asp phosphorelay between a sensor histidine kinase (HK) and a response regulator (RR). In plants, the His-to-Asp phosphorelay involves an additional intermediate named Histidine-containing phosphotransfer protein (HPt). This multistep phosphorelay consists of a His-Asp-His-Asp sequential transfer of a phosphate group between first a His and an Asp of the HK protein, followed by the transfer to a conserved His of the HPt protein and finally the transfer to an Asp in the receiver domain of the RR protein. In terms of tissue distribution, expressed in roots, leaf blades, leaf sheaths, shoot apex, flowers and panicles.

Its function is as follows. Functions as a response regulator involved in His-to-Asp phosphorelay signal transduction system. Phosphorylation of the Asp residue in the receiver domain activates the ability of the protein to promote the transcription of target genes. Type-A response regulators seem to act as negative regulators of the cytokinin signaling. Involved in adventitious (crown) root initiation under the regulation of CRL5. In Oryza sativa subsp. japonica (Rice), this protein is Two-component response regulator ORR1.